A 514-amino-acid chain; its full sequence is Exoglucanase 1 (514 aa).

The signal sequence occupies residues M1–A17. Q18 carries the post-translational modification Pyrrolidone carboxylic acid. A catalytic region spans residues Q18–N453. 10 disulfides stabilise this stretch: C21/C89, C36/C42, C67/C88, C78/C84, C155/C414, C189/C227, C193/C226, C247/C273, C255/C260, and C278/C348. N62 carries N-linked (GlcNAc) asparagine glycosylation. The active-site Nucleophile is E229. E234 acts as the Proton donor/acceptor in catalysis. N287 carries N-linked (GlcNAc...) (high mannose) asparagine glycosylation. An N-linked (GlcNAc) asparagine glycan is attached at N401. The segment covering N401–N437 has biased composition (polar residues). Positions N401–S481 are disordered. The linker stretch occupies residues P454 to P478. Low complexity predominate over residues P460–T479. O-linked (Man) threonine glycosylation occurs at T462. T463, T464, and T465 each carry an O-linked (Man...) threonine glycan. T470 carries O-linked (Man) threonine glycosylation. 2 O-linked (Man...) threonine glycosylation sites follow: T471 and T472. 2 O-linked (Man) serine glycosylation sites follow: S474 and S475. The region spanning P478–L514 is the CBM1 domain. The O-linked (Man) threonine glycan is linked to T479. S481 and S492 each carry an O-linked (Man) serine glycan. Disulfide bonds link C486–C503 and C497–C513.

It belongs to the glycosyl hydrolase 7 (cellulase C) family. N-glycosylated. A high mannose glycan is attached to Asn-287 (predominantly Man(8)GlcNAc(2)) and single GlcNAc occupancy is observed at Asn-62 and Asn-401 with some site heterogeneity depending on strains and fermentation conditions. Post-translationally, O-glycosylated. Within the linker domain, all 8 threonines are variably glycosylated with between at least one, and up to three, mannose residues per site. All serines in this domain are at least partially glycosylated with a single mannose residue. O-glycosylation of the cellulase linker provides protection from proteolysis. Linker glycans also contribute to binding affinity of cellobiohydrolases to cellulose.

It is found in the secreted. It catalyses the reaction Hydrolysis of (1-&gt;4)-beta-D-glucosidic linkages in cellulose and cellotetraose, releasing cellobiose from the non-reducing ends of the chains.. In terms of biological role, exocellobiohydrolases (CBH) that catalyzes the hydrolysis of 1,4-beta-D-glucosidic bonds in cellulose to release the disaccharide cellobiose. The degradation of cellulose involves an interplay between different cellulolytic enzymes. Hydrolysis starts with endoglucanases (EGs), which cut internal beta-1,4-glucosidic bonds in cellulose to reduce the polymerization degree of the substrate and create new chain ends for exocellobiohydrolases (CBHs). The CBHs release the disaccharide cellobiose from the non-reducing end of the cellulose polymer chain. Finally, beta-1,4-glucosidases hydrolyze the cellobiose and other short cello-oligosaccharides into glucose units. The protein is Exoglucanase 1 (cbh1) of Hypocrea jecorina (strain ATCC 56765 / BCRC 32924 / NRRL 11460 / Rut C-30) (Trichoderma reesei).